The chain runs to 506 residues: uncharacterized protein (506 aa).

This sequence belongs to the Mg-chelatase subunits D/I family. ComM subfamily.

This is an uncharacterized protein from Escherichia coli (strain K12).